The following is a 258-amino-acid chain: UPF0758 protein Bcep1808_2579 (258 aa).

The MPN domain maps to 136 to 258 (PIDSPGAVED…TFSFARAGWL (123 aa)). Positions 207, 209, and 220 each coordinate Zn(2+). Residues 207 to 220 (HNHPSGAVQPSAED) carry the JAMM motif motif.

Belongs to the UPF0758 family.

The chain is UPF0758 protein Bcep1808_2579 from Burkholderia vietnamiensis (strain G4 / LMG 22486) (Burkholderia cepacia (strain R1808)).